A 638-amino-acid chain; its full sequence is 1-deoxy-D-xylulose-5-phosphate synthase (638 aa).

Thiamine diphosphate is bound by residues H74 and G115–S117. A Mg(2+)-binding site is contributed by D146. Thiamine diphosphate contacts are provided by residues G147–A148, N175, Y286, and E366. Mg(2+) is bound at residue N175.

It belongs to the transketolase family. DXPS subfamily. As to quaternary structure, homodimer. It depends on Mg(2+) as a cofactor. Requires thiamine diphosphate as cofactor.

The enzyme catalyses D-glyceraldehyde 3-phosphate + pyruvate + H(+) = 1-deoxy-D-xylulose 5-phosphate + CO2. It functions in the pathway metabolic intermediate biosynthesis; 1-deoxy-D-xylulose 5-phosphate biosynthesis; 1-deoxy-D-xylulose 5-phosphate from D-glyceraldehyde 3-phosphate and pyruvate: step 1/1. In terms of biological role, catalyzes the acyloin condensation reaction between C atoms 2 and 3 of pyruvate and glyceraldehyde 3-phosphate to yield 1-deoxy-D-xylulose-5-phosphate (DXP). The chain is 1-deoxy-D-xylulose-5-phosphate synthase from Syntrophomonas wolfei subsp. wolfei (strain DSM 2245B / Goettingen).